A 355-amino-acid polypeptide reads, in one-letter code: MIEQIKEVYENGFTIYRDGEVEKRELCWNDELCVGCGICADICPVNAIAMGPLGAIAKGDIIAPKLDIDKDVCVLCGMCASACPFDALDLKINGKSIKEDERYPKIKRDIKVYQDKCVLCEQCEMVCPQGAIVVERELAEREKFVIGEININKEKCVLCGICAEYCPADAINLKYNYPTPSNPKPITDIEVDKDKCVFCKVCEFVCPHDAIEVICYKCPMMKRIPQAKLYEDITGKTVIDKDACVTCGWCAFICPAEAIEVEKPFKGELIIDVNACNACGACISICPCSALEFPKPKDKAEKVPRIIVNQNLCVLCGACAKACPVNAIKVKRTEINFEREPKAIAWKEAFKKLMG.

8 consecutive 4Fe-4S ferredoxin-type domains span residues 24 to 53, 64 to 93, 108 to 137, 147 to 176, 187 to 216, 235 to 264, 267 to 296, and 304 to 333; these read RELC…MGPL, PKLD…LKIN, RDIK…VERE, GEIN…LKYN, TDIE…VICY, GKTV…VEKP, GELI…FPKP, and PRII…VKRT. [4Fe-4S] cluster-binding residues include C33, C36, C39, C43, C73, C76, C79, C83, C117, C120, C123, C127, C156, C159, C162, C166, C196, C199, C202, C206, C244, C247, C250, C254, C276, C279, C282, C286, C313, C316, C319, and C323.

It depends on [4Fe-4S] cluster as a cofactor.

This chain is Polyferredoxin protein FwdF (fwdF), found in Methanocaldococcus jannaschii (strain ATCC 43067 / DSM 2661 / JAL-1 / JCM 10045 / NBRC 100440) (Methanococcus jannaschii).